Reading from the N-terminus, the 49-residue chain is Large ribosomal subunit protein bL33B (49 aa).

Belongs to the bacterial ribosomal protein bL33 family.

The sequence is that of Large ribosomal subunit protein bL33B from Oceanobacillus iheyensis (strain DSM 14371 / CIP 107618 / JCM 11309 / KCTC 3954 / HTE831).